We begin with the raw amino-acid sequence, 503 residues long: Glutamate--tRNA ligase (503 aa).

Residues 15–25 (PSPTGYLHVGG) carry the 'HIGH' region motif. Residues 262 to 266 (KLSKR) carry the 'KMSKS' region motif. Lys-265 contacts ATP.

It belongs to the class-I aminoacyl-tRNA synthetase family. Glutamate--tRNA ligase type 1 subfamily. Monomer.

The protein localises to the cytoplasm. The catalysed reaction is tRNA(Glu) + L-glutamate + ATP = L-glutamyl-tRNA(Glu) + AMP + diphosphate. In terms of biological role, catalyzes the attachment of glutamate to tRNA(Glu) in a two-step reaction: glutamate is first activated by ATP to form Glu-AMP and then transferred to the acceptor end of tRNA(Glu). The polypeptide is Glutamate--tRNA ligase (Prosthecochloris aestuarii (strain DSM 271 / SK 413)).